Consider the following 106-residue polypeptide: Toxin-like structure LSTX-D6 (106 aa).

Residues 1–20 (MMKVLVVAALLVTLISYSSS) form the signal peptide. Positions 21-41 (EGIDDLEADELLSLMANEQTR) are excised as a propeptide. 4 disulfide bridges follow: Cys45/Cys60, Cys52/Cys69, Cys59/Cys85, and Cys71/Cys83.

Belongs to the neurotoxin 19 (CSTX) family. 02 (D7) subfamily. Expressed by the venom gland.

It is found in the secreted. The protein is Toxin-like structure LSTX-D6 of Lycosa singoriensis (Wolf spider).